A 397-amino-acid polypeptide reads, in one-letter code: 2-acyl-1-lysophosphatidylinositol acyltransferase (397 aa).

The HXXXXD motif motif lies at His112–Asp117.

It belongs to the 1-acyl-sn-glycerol-3-phosphate acyltransferase family.

Its subcellular location is the lipid droplet. The enzyme catalyses 1-heptadecanoyl-sn-glycero-3-phosphate + octadecanoyl-CoA = 1-heptadecanoyl-2-octadecanoyl-sn-glycero-3-phosphate + CoA. It carries out the reaction 1-heptadecanoyl-sn-glycero-3-phosphate + tetradecanoyl-CoA = 1-heptadecanoyl-2-tetradecanoyl-sn-glycero-3-phosphate + CoA. The catalysed reaction is 1-heptadecanoyl-sn-glycero-3-phosphate + hexadecanoyl-CoA = 1-heptadecanoyl-2-hexadecanoyl-sn-glycero-3-phosphate + CoA. Its function is as follows. Acyltransferase with lysophosphatidic acid acyltransferase (LPAAT) activity. Fatty acyl substrates include 18:0-acyl-CoA, 16:0-acyl-CoA, 17:0-acyl-CoA and 14:0-acyl-CoA. Responsible for the acyl-CoA-dependent introduction of saturated very long chain fatty acids (VLCFAs) into phosphatidylinositol, transferring saturated FAs with 18 to 26 carbon atoms. Responsible for the incorporation of stearate into phosphatidylinositol. Overexpression has an effect on chromosome stability. Regulates phosphorylation and expression of glycerol-3-phosphate acyltransferase SCT1. This Saccharomyces cerevisiae (strain ATCC 204508 / S288c) (Baker's yeast) protein is 2-acyl-1-lysophosphatidylinositol acyltransferase.